The chain runs to 588 residues: Sperm-associated microtubule inner protein 4 (588 aa).

Thr-219 bears the Phosphothreonine mark. 5 positions are modified to phosphoserine: Ser-224, Ser-406, Ser-421, Ser-427, and Ser-437. A Phosphotyrosine modification is found at Tyr-441. 2 positions are modified to phosphoserine: Ser-457 and Ser-484. Position 512 is a phosphothreonine (Thr-512). Residue Ser-516 is modified to Phosphoserine. A Glycyl lysine isopeptide (Lys-Gly) (interchain with G-Cter in SUMO2) cross-link involves residue Lys-543. A Phosphoserine modification is found at Ser-545.

It is found in the cytoplasm. The protein resides in the cytoskeleton. Its subcellular location is the microtubule organizing center. It localises to the centrosome. The protein localises to the flagellum axoneme. In terms of biological role, microtubule inner protein (MIP) part of the dynein-decorated doublet microtubules (DMTs) in flagellum axoneme. May serve to reinforce and thus stabilize the microtubule structure in the sperm flagella. The protein is Sperm-associated microtubule inner protein 4 (Spmip4) of Rattus norvegicus (Rat).